The chain runs to 224 residues: tRNA (guanine-N(7)-)-methyltransferase (224 aa).

S-adenosyl-L-methionine is bound by residues E56, E81, D108, and D131. Residue D131 is part of the active site. Residues K135, D167, and 202–205 (TKFE) contribute to the substrate site.

Belongs to the class I-like SAM-binding methyltransferase superfamily. TrmB family.

The enzyme catalyses guanosine(46) in tRNA + S-adenosyl-L-methionine = N(7)-methylguanosine(46) in tRNA + S-adenosyl-L-homocysteine. Its pathway is tRNA modification; N(7)-methylguanine-tRNA biosynthesis. Its function is as follows. Catalyzes the formation of N(7)-methylguanine at position 46 (m7G46) in tRNA. The sequence is that of tRNA (guanine-N(7)-)-methyltransferase from Nitrosomonas eutropha (strain DSM 101675 / C91 / Nm57).